Consider the following 322-residue polypeptide: HPr kinase/phosphorylase (322 aa).

Residues His146 and Lys167 contribute to the active site. 161–168 (GDSGLGKS) contributes to the ATP binding site. Position 168 (Ser168) interacts with Mg(2+). The active-site Proton acceptor; for phosphorylation activity. Proton donor; for dephosphorylation activity is the Asp185. The interval 209-218 (LEVRGLGLLD) is important for the catalytic mechanism of both phosphorylation and dephosphorylation. Glu210 provides a ligand contact to Mg(2+). Arg250 is an active-site residue. The interval 271–276 (QVAAGR) is important for the catalytic mechanism of dephosphorylation.

Belongs to the HPrK/P family. As to quaternary structure, homohexamer. The cofactor is Mg(2+).

It catalyses the reaction [HPr protein]-L-serine + ATP = [HPr protein]-O-phospho-L-serine + ADP + H(+). The enzyme catalyses [HPr protein]-O-phospho-L-serine + phosphate + H(+) = [HPr protein]-L-serine + diphosphate. Catalyzes the ATP- as well as the pyrophosphate-dependent phosphorylation of a specific serine residue in HPr, a phosphocarrier protein of the phosphoenolpyruvate-dependent sugar phosphotransferase system (PTS). HprK/P also catalyzes the pyrophosphate-producing, inorganic phosphate-dependent dephosphorylation (phosphorolysis) of seryl-phosphorylated HPr (P-Ser-HPr). This Paraburkholderia xenovorans (strain LB400) protein is HPr kinase/phosphorylase.